The chain runs to 54 residues: Hemolytic toxin (54 aa).

The segment at 3–12 (ALAGTIIAGA) is plays an important role in the hemolytic activity. The N-terminal region stretch occupies residues 11-30 (GASLGFQILDKVLGELGKVS).

It belongs to the actinoporin family. Sea anemone subfamily. In terms of assembly, octamer or nonamer in membranes. Monomer in the soluble state.

It is found in the secreted. It localises to the nematocyst. Its subcellular location is the target cell membrane. Its function is as follows. Pore-forming protein that forms cations-selective hydrophilic pores of around 1 nm and causes cytolysis. Pore formation is a multi-step process that involves specific recognition of membrane sphingomyelin (but neither cholesterol nor phosphatidylcholine) using aromatic rich region and adjacent phosphocholine (POC) binding site, firm binding to the membrane (mainly driven by hydrophobic interactions) accompanied by the transfer of the N-terminal region to the lipid-water interface and finally pore formation after oligomerization of monomers. The sequence is that of Hemolytic toxin from Heteractis magnifica (Magnificent sea anemone).